Here is a 337-residue protein sequence, read N- to C-terminus: Transaldolase (337 aa).

Lys115 is modified (N6-acetyllysine). The Schiff-base intermediate with substrate role is filled by Lys142. Residue Lys219 is modified to N6-acetyllysine. Residues Ser237 and Ser256 each carry the phosphoserine modification. An N6-acetyllysine mark is found at Lys269, Lys286, and Lys321.

The protein belongs to the transaldolase family. Type 1 subfamily. As to quaternary structure, homodimer.

The protein localises to the cytoplasm. The catalysed reaction is D-sedoheptulose 7-phosphate + D-glyceraldehyde 3-phosphate = D-erythrose 4-phosphate + beta-D-fructose 6-phosphate. The protein operates within carbohydrate degradation; pentose phosphate pathway; D-glyceraldehyde 3-phosphate and beta-D-fructose 6-phosphate from D-ribose 5-phosphate and D-xylulose 5-phosphate (non-oxidative stage): step 2/3. Transaldolase is important for the balance of metabolites in the pentose-phosphate pathway. The chain is Transaldolase (TALDO1) from Bos taurus (Bovine).